A 780-amino-acid polypeptide reads, in one-letter code: Lethal(3)malignant brain tumor-like protein 3 (780 aa).

Residues 1–64 (MTESASSTSG…VKKATATTTW (64 aa)) form an interaction with RBPJ. Required for transcription repressor activity on Notch target genes region. A disordered region spans residues 149 to 220 (DKDQKEERDV…RKRRGDSAVL (72 aa)). 2 stretches are compositionally biased toward acidic residues: residues 157–166 (DVEEDNEEED) and 185–194 (EDGEERDDEM). 3 MBT repeats span residues 232 to 332 (WCWA…LHPP), 340 to 439 (FNWQ…LITP), and 448 to 543 (FSWD…LQPP). The CCHHC-type; degenerate zinc-finger motif lies at 549–593 (LMEASEHGGCSTPGCKGIGHFKRARHLGPHSAANCPYSEINLNKD). Positions 597 to 665 (PDRLSGEMPP…GAREEPTVQQ (69 aa)) are disordered. The interaction with DCAF5 stretch occupies residues 600 to 710 (LSGEMPPASP…PASKVSKWST (111 aa)). At serine 608 the chain carries Phosphoserine. Lysine 637 is covalently cross-linked (Glycyl lysine isopeptide (Lys-Gly) (interchain with G-Cter in SUMO2)). Basic and acidic residues predominate over residues 643–661 (RTESEMRTSHEARGAREEP). Lysine 704 is covalently cross-linked (Glycyl lysine isopeptide (Lys-Gly) (interchain with G-Cter in SUMO2)). Residues 708–772 (WSTDEVSEFI…FNSILMFKAA (65 aa)) enclose the SAM domain.

Interacts with RNF2. Interacts (via SAM domain) with SAMD1 (via SAM domain); the interaction mediates L3MBTL3 binding to chromatin. Interacts with RBPJ; the interaction is required for L3MBTL3 localization to chromatin and is impaired by Notch-derived peptides containing the intracellular domain (NICD). Interacts (via SAM domain) with KDM1A. Interacts with DCAF5. Interacts with DNMT1. Interacts with E2F1. Interacts with SOX2. Interacts with SFMBT1.

Its subcellular location is the nucleus. Is a negative regulator of Notch target genes expression, required for RBPJ-mediated transcriptional repression. It recruits KDM1A to Notch-responsive elements and promotes KDM1A-mediated H3K4me demethylation. Involved in the regulation of ubiquitin-dependent degradation of a set of methylated non-histone proteins, including SOX2, DNMT1 and E2F1. It acts as an adapter recruiting the CRL4-DCAF5 E3 ubiquitin ligase complex to methylated target proteins. Required for normal maturation of myeloid progenitor cells. The polypeptide is Lethal(3)malignant brain tumor-like protein 3 (Homo sapiens (Human)).